The following is a 146-amino-acid chain: Angiogenin (146 aa).

A signal peptide spans 1-24; the sequence is MVMGLHLLLLVFILGLGLTPPTLA. A Pyrrolidone carboxylic acid modification is found at Gln25. The active-site Proton acceptor is the His37. Cystine bridges form between Cys50–Cys105, Cys63–Cys116, and Cys81–Cys131. The short motif at 55–59 is the Nucleolar localization signal element; sequence RLRNM. Cys105 contributes to the tRNA binding site. The Proton donor role is filled by His138.

Belongs to the pancreatic ribonuclease family. In terms of assembly, homodimer. Interacts with RNH1; inhibiting ANG ribonuclease activity. Interacts with PCNA.

Its subcellular location is the secreted. The protein resides in the nucleus. It is found in the nucleolus. The protein localises to the cytoplasm. It localises to the stress granule. Has weak tRNA ribonuclease activity by itself due to partial autoinhibition by its C-terminus, which folds into a short alpha-helix that partially occludes the substrate-binding site. In absence of stress, the ribonuclease activity is inhibited by RNH1 in the cytoplasm. In response to stress, dissociates from RNH1 in the cytoplasm and associates with cytoplasmic ribosomes with vacant A-sites: ribosomes directly activate the tRNA ribonuclease activity of ANG by refolding the C-terminal alpha-helix. In response to stress, the angiogenic activity of ANG is inhibited by RNH1 in the nucleus. Secreted ribonuclease that can either promote or restrict cell proliferation of target cells, depending on the context. Endocytosed in target cells via its receptor PLXNB2 and translocates to the cytoplasm or nucleus. Under stress conditions, localizes to the cytoplasm and promotes the assembly of stress granules (SGs): specifically cleaves a subset of tRNAs within anticodon loops to produce tRNA-derived stress-induced fragments (tiRNAs), resulting in translation repression and inhibition of cell proliferation. tiRNas also prevent formation of apoptosome, thereby promoting cell survival. Preferentially cleaves RNAs between a pyrimidine and an adenosine residue, suggesting that it cleaves the anticodon loop of tRNA(Ala) (32-UUAGCAU-38) after positions 33 and 36. Cleaves a subset of tRNAs, including tRNA(Ala), tRNA(Glu), tRNA(Gly), tRNA(Lys), tRNA(Val), tRNA(His), tRNA(Asp) and tRNA(Sec). Under growth conditions and in differentiated cells, translocates to the nucleus and stimulates ribosomal RNA (rRNA) transcription, including that containing the initiation site sequences of 45S rRNA, thereby promoting cell growth and proliferation. Angiogenin induces vascularization of normal and malignant tissues via its ability to promote rRNA transcription. Involved in hematopoietic stem and progenitor cell (HSPC) growth and survival by promoting rRNA transcription in growth conditions and inhibiting translation in response to stress, respectively. Mediates the crosstalk between myeloid and intestinal epithelial cells to protect the intestinal epithelial barrier integrity: secreted by myeloid cells and promotes intestinal epithelial cells proliferation and survival. Also mediates osteoclast-endothelial cell crosstalk in growing bone: produced by osteoclasts and protects the neighboring vascular cells against senescence by promoting rRNA transcription. In Aotus trivirgatus (Three-striped night monkey), this protein is Angiogenin (ANG).